A 149-amino-acid polypeptide reads, in one-letter code: Stathmin (149 aa).

At Ala2 the chain carries N-acetylalanine. Residue Ser4 is modified to Phosphoserine. The SLD domain occupies 4–145; sequence SDIQVKELEK…NKESKDPADE (142 aa). N6-acetyllysine is present on Lys9. Ser16 carries the phosphoserine; by PKA modification. Ser25 is subject to Phosphoserine; by CDK1, MAPK1 and MAPK3. The tract at residues 27–46 is disordered; the sequence is RSKESVPDFPLSPPKKKDLS. Lys29 is modified (N6-methyllysine). Residue Ser31 is modified to Phosphoserine. Ser38 bears the Phosphoserine; by CDK1, MAPK1 and MAPK3 mark. Residues 41 to 140 adopt a coiled-coil conformation; sequence KKKDLSLEEI…EEVRKNKESK (100 aa). Ser63 carries the post-translational modification Phosphoserine; by PKA. 2 positions are modified to N6-acetyllysine: Lys100 and Lys119. Over residues 104-143 the composition is skewed to basic and acidic residues; it reads KMEANKENREAQMAAKLERLREKDKHVEEVRKNKESKDPA. The segment at 104–149 is disordered; it reads KMEANKENREAQMAAKLERLREKDKHVEEVRKNKESKDPADETEAD.

This sequence belongs to the stathmin family. Binds to two alpha/beta-tubulin heterodimers. Interacts with KIST. Post-translationally, many different phosphorylated forms are observed depending on specific combinations among the sites which can be phosphorylated. MAPK is responsible for the phosphorylation of stathmin in response to NGF. Phosphorylation at Ser-16 seems to be required for neuron polarization. Highly expressed in the lateral nucleus of the amygdala.

It is found in the cytoplasm. It localises to the cytoskeleton. Its function is as follows. Involved in the regulation of the microtubule (MT) filament system by destabilizing microtubules. Prevents assembly and promotes disassembly of microtubules. Phosphorylation at Ser-16 may be required for axon formation during neurogenesis. Involved in the control of the learned and innate fear. In Mus musculus (Mouse), this protein is Stathmin (Stmn1).